The following is a 441-amino-acid chain: Proline--tRNA ligase (441 aa).

Belongs to the class-II aminoacyl-tRNA synthetase family. ProS type 2 subfamily. As to quaternary structure, homodimer.

It localises to the cytoplasm. The enzyme catalyses tRNA(Pro) + L-proline + ATP = L-prolyl-tRNA(Pro) + AMP + diphosphate. Functionally, catalyzes the attachment of proline to tRNA(Pro) in a two-step reaction: proline is first activated by ATP to form Pro-AMP and then transferred to the acceptor end of tRNA(Pro). This Methylorubrum populi (strain ATCC BAA-705 / NCIMB 13946 / BJ001) (Methylobacterium populi) protein is Proline--tRNA ligase.